The following is a 162-amino-acid chain: Xylulose kinase (162 aa).

Residues 16–39 (GGHSATPRPATGPAGPAAHSGRHQ) are disordered. Residues 20-33 (ATPRPATGPAGPAA) are compositionally biased toward low complexity.

Belongs to the FGGY kinase family.

The enzyme catalyses D-xylulose + ATP = D-xylulose 5-phosphate + ADP + H(+). Its function is as follows. Catalyzes the phosphorylation of D-xylulose to D-xylulose 5-phosphate. The protein is Xylulose kinase of Actinoplanes sp. (strain ATCC 31351 / 3876) (Ampullariella sp.).